The chain runs to 408 residues: Hepatocyte nuclear factor 4-gamma (408 aa).

The segment at residues 9–84 (NCLCAICGDR…AGMKKEAVQN (76 aa)) is a DNA-binding region (nuclear receptor). 2 NR C4-type zinc fingers span residues 12 to 32 (CAICGDRATGKHYGASSCDGC) and 48 to 72 (CRFSRQCVVDKDKRNQCRYCRLRKC). A Phosphoserine modification is found at serine 94. The NR LBD domain occupies 99–328 (SNIPSINTLA…NLLQEMLLGG (230 aa)). The interval 369 to 408 (ATPETPLPSPPQGSGQEPYKITANQASVISHQSLSKQKQL) is disordered. Threonine 370 and threonine 373 each carry phosphothreonine. Serine 377 is subject to Phosphoserine. Residues 390–408 (TANQASVISHQSLSKQKQL) show a composition bias toward polar residues.

Belongs to the nuclear hormone receptor family. NR2 subfamily.

Its subcellular location is the nucleus. In terms of biological role, transcription factor. Has a lower transcription activation potential than HNF4-alpha. The sequence is that of Hepatocyte nuclear factor 4-gamma (Hnf4g) from Mus musculus (Mouse).